Here is a 287-residue protein sequence, read N- to C-terminus: Aquaporin PIP1-1 (287 aa).

The next 2 membrane-spanning stretches (helical) occupy residues 57–77 and 92–114; these read IAEF…VMGV and IAWS…SGHI. An NPA 1 motif is present at residues 115–117; it reads NPA. 3 helical membrane passes run 134–154, 176–196, and 210–230; these read VFYI…VKGF, GDGL…VFSA, and ILAP…TMGI. The short motif at 236–238 is the NPA 2 element; it reads NPA. Residues 258–278 form a helical membrane-spanning segment; that stretch reads IFWVGPFIGAALAAIYHQVII.

It belongs to the MIP/aquaporin (TC 1.A.8) family. PIP (TC 1.A.8.11) subfamily. May interact with PIP1-2 to form heteromers. In terms of tissue distribution, highly expressed in roots, shoots and developing tassels, and at lower levels in leaves.

The protein resides in the cell membrane. Functionally, water channel required to facilitate the transport of water across cell membrane. Active as heteromers with PIP1-2, but not as homomers. This Zea mays (Maize) protein is Aquaporin PIP1-1 (PIP1-1).